The chain runs to 794 residues: Alpha-1,3-galactosidase B (794 aa).

The signal sequence occupies residues 1 to 57; sequence MEGNLSFSLMEASGRSIFFLIEGIREQSIKNMFSRMFSWSFVVAACLAGLFPAQSQG. PbH1 repeat units follow at residues 468-499, 609-631, 632-654, 665-686, and 707-728; these read SEDFHMKGGGVMVRKGTGRVHTAGADATHFSN, YPSVVFRNNIVRNNRARGSLFTT, PERVLVEGNLFDHSSGSAILLAG, CHEVVIRKNTFINNLTSRYQFT, and HRNVLIENNVFKTFDVPLLFAI.

It belongs to the glycosyl hydrolase 110 family. B subfamily.

It carries out the reaction Hydrolysis of terminal, non-reducing branched (1-&gt;3)-alpha-D-galactosidic residues, producing free D-galactose.. It catalyses the reaction Hydrolysis of terminal, non-reducing linear (1-&gt;3)-alpha-D-galactosidic residues, producing free D-galactose.. The catalysed reaction is Hydrolysis of terminal, non-reducing alpha-D-galactose residues in alpha-D-galactosides, including galactose oligosaccharides, galactomannans and galactolipids.. Alpha-galactosidase. Removes both branched alpha-1,3-linked galactose residues of blood group B antigens and linear alpha-1,3-linked galactose structures. This chain is Alpha-1,3-galactosidase B (glaB), found in Akkermansia muciniphila (strain ATCC BAA-835 / DSM 22959 / JCM 33894 / BCRC 81048 / CCUG 64013 / CIP 107961 / Muc).